The chain runs to 383 residues: Outer membrane protein assembly factor BamB (383 aa).

An N-terminal signal peptide occupies residues 1 to 23 (MMLLKRCNRRALVALAAVLLLAA). Cys-24 carries N-palmitoyl cysteine lipidation. The S-diacylglycerol cysteine moiety is linked to residue Cys-24.

The protein belongs to the BamB family. Part of the Bam complex.

It is found in the cell outer membrane. Functionally, part of the outer membrane protein assembly complex, which is involved in assembly and insertion of beta-barrel proteins into the outer membrane. This Alkalilimnicola ehrlichii (strain ATCC BAA-1101 / DSM 17681 / MLHE-1) protein is Outer membrane protein assembly factor BamB.